The chain runs to 554 residues: Undecaprenyl phosphate-alpha-4-amino-4-deoxy-L-arabinose arabinosyl transferase (554 aa).

The next 11 membrane-spanning stretches (helical) occupy residues 4-24 (LKDSGAALLALFFVLVYLLPV), 87-107 (FGSIFSTALSAVLVYWLATLL), 115-135 (VLATLIYLSFLLVFGIGTYAV), 178-198 (FMTKGFLALAVPVIAVLPIVI), 206-226 (LVVFGPIAIVCAVLLSLPWAL), 262-282 (YLPILCIGVLPWLGLLPGALF), 293-313 (ELFFLLSWVVMPLLFFSVAKG), 315-335 (LPTYILPCMAPLSLLMAAYAT), 351-371 (VINLLFGVACALVIVVIGLGL), 384-404 (QKVWLGVLAFAGWGVTGFITL), and 414-434 (AAACPLLFILLVGYLIPQQVV).

It belongs to the glycosyltransferase 83 family.

It is found in the cell inner membrane. It catalyses the reaction 4-amino-4-deoxy-alpha-L-arabinopyranosyl di-trans,octa-cis-undecaprenyl phosphate + lipid IVA = lipid IIA + di-trans,octa-cis-undecaprenyl phosphate.. Its pathway is lipopolysaccharide metabolism; 4-amino-4-deoxy-beta-L-arabinose-lipid A biosynthesis. Catalyzes the transfer of the L-Ara4N moiety of the glycolipid undecaprenyl phosphate-alpha-L-Ara4N to lipid A. The modified arabinose is attached to lipid A and is required for resistance to polymyxin and cationic antimicrobial peptides. The protein is Undecaprenyl phosphate-alpha-4-amino-4-deoxy-L-arabinose arabinosyl transferase of Yersinia pseudotuberculosis serotype O:1b (strain IP 31758).